Here is a 752-residue protein sequence, read N- to C-terminus: MLPGWHSIASLVKRIDIPIVASTTPAEIAEMQQDAWPEAGKYGLGWVYFSVILLAISTIIRFYHLWGDQIRIALHKEDMAGTSPYVTSPQEEYELPSAATDSSTTHFFPARGPLPSTNTTKQQSSISTIAPLNNTIAFVRWIFYRPIPVLRIGKLRIGFPSLGASSIILAALIFVTLYSFVPQPLYYSSISIGSPPLAIRAGMIAVAMIPWIIALSTRANFVSILTGISHERLNVLHRWAGYLCLFLSLIHMVPFYVTPIWESTNFMYYQQYFPRNIYIYGTGWAALVPLIVLCLHSLPILRAWMYELFKLVHLPLSIIFLAMIFWHSKNFLASWDYLWATVAIWMLSYAVRLFYVNWSNPLRLSFLIGEECAVTILPQNAIKVTVATQMKWKPGQFVYLRMPGISLFERHPFTISSLCSGDFPSEYGENYRDLALVFRPFGGFTRNVFLKTFEYGPYKTWTAFLEGPYGGMKRDMAAFDDVVFFAGGSGITATASHLLNLIKKMRDRKAVTRSVRVVWAFRSPETIDWFREELRICRDFAPPNTVHCHFFLTGLEPHGQDQLAQNQFYQEMLRDKMYNTLEGMDKRNSAYIREEAAGDPEIEKELRRENEDAITALPLAHTLPHINTSRHYTSPMDNNYQHAPYPAPHVSPADTPFNFGFPPSSTVFPKLTTRVGTVPLQRNGWRIDYARPNIPQVLKDYSRTFGRRTCVFVCGPPSMRVEVSKAVAQLQQVVMTDSSKDEIFLHAENYNV.

A helical transmembrane segment spans residues 40-60 (GKYGLGWVYFSVILLAISTII). N-linked (GlcNAc...) asparagine glycosylation is found at asparagine 118 and asparagine 133. The next 2 membrane-spanning stretches (helical) occupy residues 157 to 177 (IGFP…FVTL) and 195 to 215 (PPLA…IIAL). Positions 201–348 (AGMIAVAMIP…WATVAIWMLS (148 aa)) constitute a Ferric oxidoreductase domain. Residues histidine 237 and histidine 251 each contribute to the heme site. Transmembrane regions (helical) follow at residues 241–261 (GYLC…TPIW), 281–301 (GTGW…LPIL), and 306–326 (YELF…MIFW). 2 residues coordinate heme: histidine 313 and histidine 327. Residues 331-351 (FLASWDYLWATVAIWMLSYAV) form a helical membrane-spanning segment. An FAD-binding FR-type domain is found at 349–475 (YAVRLFYVNW…EGPYGGMKRD (127 aa)). Asparagine 357 carries N-linked (GlcNAc...) asparagine glycosylation. 467-470 (GPYG) provides a ligand contact to NADP(+). The chain crosses the membrane as a helical span at residues 482 to 502 (VVFFAGGSGITATASHLLNLI). N-linked (GlcNAc...) asparagine glycosylation occurs at asparagine 627. 714 to 715 (CG) provides a ligand contact to NADP(+).

The protein belongs to the ferric reductase (FRE) family. FAD serves as cofactor. The cofactor is heme.

It localises to the cell membrane. It catalyses the reaction 2 a Fe(II)-siderophore + NADP(+) + H(+) = 2 a Fe(III)-siderophore + NADPH. Probable cell surface ferric reductase that acts as a negative regulatory factor of growth and development. Involved in kojic acid production through the regulation of kojA expression. The chain is Probable cell surface ferric reductase kap2 from Aspergillus oryzae (strain ATCC 42149 / RIB 40) (Yellow koji mold).